Reading from the N-terminus, the 1390-residue chain is Bromodomain adjacent to zinc finger domain protein 2 (1390 aa).

Disordered stretches follow at residues 30–67 (AKIQ…QNEA), 178–215 (AKKK…AANN), and 235–269 (QKQQ…DVKN). Positions 35–45 (ATASSPSKSTN) are enriched in polar residues. 2 stretches are compositionally biased toward low complexity: residues 46-63 (GTSA…TSSS) and 186-215 (ASTS…AANN). Residues 243–269 (DTQKKADQAKKAKELAKQQQKEQDVKN) are compositionally biased toward basic and acidic residues. The MBD domain maps to 323–395 (KTNEAMLRLP…DNFLFNTKLV (73 aa)). The DDT domain maps to 524–588 (SQGFADALMV…LRLALEFPGM (65 aa)). A compositionally biased stretch (basic and acidic residues) spans 705-724 (KEEQNHESDSEPPTRPDTPK). The segment at 705–729 (KEEQNHESDSEPPTRPDTPKKATVA) is disordered. Residues 1100 to 1149 (EALCQICKSMDGDEMLVCDGCESGCHMECFRPRMTKVPEGDWFCQRCREE) form a PHD-type zinc finger. Residues 1218–1241 (EERELEDDNHAENGENTKNGHMNG) form a disordered region. Residues 1273–1377 (LPKNMNKELC…KFFQKRWKQL (105 aa)) enclose the Bromo domain.

The protein belongs to the WAL family. As to quaternary structure, interacts with set-6. As to expression, broadly expressed in the nervous system, including head, body and tail neurons.

It localises to the nucleus. The protein resides in the chromosome. In terms of biological role, chromatin reader protein, involved in positively modulating the rate of age-related behavioral deterioration. Positively modulates the level of global trimethylated 'Lys-9' of histone H3 (H3K9me3), but not of H3K9me2 or H3K9me1. May repress the expression of mitochondrial function-related genes by occupying their promoter regions, working in concert with histone methyltransferase, set-6. Involved in modulation of the mitochondrial unfolded protein response (UPR). Negatively regulates expression of bas-1, a serotonin (5-HT) and dopamine synthesizing enzyme (DOPA decarboxylase), with aging. Negatively modulates levels of endogenous 5-HT and dopamine with aging. Involved in modulating longevity, probably as a result of enhanced stress resistance via mechanisms related to dietary restriction and mitochondrial function. This Caenorhabditis elegans protein is Bromodomain adjacent to zinc finger domain protein 2.